We begin with the raw amino-acid sequence, 430 residues long: Probable aspartic-type endopeptidase TRV_06366 (430 aa).

The N-terminal stretch at Met-1–Ser-17 is a signal peptide. The propeptide at Lys-18 to Glu-87 is activation peptide. A disordered region spans residues His-61–Asp-104. Residues Glu-87–Asp-104 are compositionally biased toward basic and acidic residues. The Peptidase A1 domain occupies Phe-109 to Ala-427. Residue Asp-125 is part of the active site. N-linked (GlcNAc...) asparagine glycosylation is present at Asn-306. Residue Asp-314 is part of the active site.

Belongs to the peptidase A1 family.

The protein resides in the secreted. Its function is as follows. Probable secreted aspartic-type endopeptidase which contributes to virulence. This chain is Probable aspartic-type endopeptidase TRV_06366, found in Trichophyton verrucosum (strain HKI 0517).